A 344-amino-acid chain; its full sequence is S-adenosylmethionine:tRNA ribosyltransferase-isomerase (344 aa).

Belongs to the QueA family. In terms of assembly, monomer.

Its subcellular location is the cytoplasm. It carries out the reaction 7-aminomethyl-7-carbaguanosine(34) in tRNA + S-adenosyl-L-methionine = epoxyqueuosine(34) in tRNA + adenine + L-methionine + 2 H(+). It participates in tRNA modification; tRNA-queuosine biosynthesis. In terms of biological role, transfers and isomerizes the ribose moiety from AdoMet to the 7-aminomethyl group of 7-deazaguanine (preQ1-tRNA) to give epoxyqueuosine (oQ-tRNA). The protein is S-adenosylmethionine:tRNA ribosyltransferase-isomerase of Lactiplantibacillus plantarum (strain ATCC BAA-793 / NCIMB 8826 / WCFS1) (Lactobacillus plantarum).